The primary structure comprises 138 residues: ATP synthase epsilon chain (138 aa).

This sequence belongs to the ATPase epsilon chain family. In terms of assembly, F-type ATPases have 2 components, CF(1) - the catalytic core - and CF(0) - the membrane proton channel. CF(1) has five subunits: alpha(3), beta(3), gamma(1), delta(1), epsilon(1). CF(0) has three main subunits: a, b and c.

The protein localises to the cell membrane. Its function is as follows. Produces ATP from ADP in the presence of a proton gradient across the membrane. The chain is ATP synthase epsilon chain from Streptococcus equinus (Streptococcus bovis).